The sequence spans 483 residues: tRNA sulfurtransferase (483 aa).

The region spanning 61-165 is the THUMP domain; that stretch reads EAVCDALTRI…DDKLILVNAR (105 aa). ATP-binding positions include 183–184, lysine 265, glycine 287, and glutamine 296; that span reads LI. Cysteines 344 and 456 form a disulfide. The Rhodanese domain maps to 404–483; the sequence is FATNDVVLDI…FNNVKVYRKK (80 aa). Cysteine 456 acts as the Cysteine persulfide intermediate in catalysis.

The protein belongs to the ThiI family.

It is found in the cytoplasm. The catalysed reaction is [ThiI sulfur-carrier protein]-S-sulfanyl-L-cysteine + a uridine in tRNA + 2 reduced [2Fe-2S]-[ferredoxin] + ATP + H(+) = [ThiI sulfur-carrier protein]-L-cysteine + a 4-thiouridine in tRNA + 2 oxidized [2Fe-2S]-[ferredoxin] + AMP + diphosphate. The enzyme catalyses [ThiS sulfur-carrier protein]-C-terminal Gly-Gly-AMP + S-sulfanyl-L-cysteinyl-[cysteine desulfurase] + AH2 = [ThiS sulfur-carrier protein]-C-terminal-Gly-aminoethanethioate + L-cysteinyl-[cysteine desulfurase] + A + AMP + 2 H(+). Its pathway is cofactor biosynthesis; thiamine diphosphate biosynthesis. Catalyzes the ATP-dependent transfer of a sulfur to tRNA to produce 4-thiouridine in position 8 of tRNAs, which functions as a near-UV photosensor. Also catalyzes the transfer of sulfur to the sulfur carrier protein ThiS, forming ThiS-thiocarboxylate. This is a step in the synthesis of thiazole, in the thiamine biosynthesis pathway. The sulfur is donated as persulfide by IscS. This chain is tRNA sulfurtransferase, found in Proteus mirabilis (strain HI4320).